The sequence spans 1025 residues: Complement receptor type 2 (1025 aa).

Residues 1–11 (MLTWFLFYFSE) form the signal peptide. The 64-residue stretch at 12-75 (ISCDPPPEVK…WDKAPPICES (64 aa)) folds into the Sushi 1 domain. The Extracellular portion of the chain corresponds to 12–963 (ISCDPPPEVK…PLALCKYRRW (952 aa)). 2 disulfide bridges follow: Cys14–Cys56 and Cys42–Cys73. 2 N-linked (GlcNAc...) asparagine glycosylation sites follow: Asn77 and Asn113. Sushi domains follow at residues 80–140 (ISCS…VCES), 144–204 (LECP…TCKE), 205–265 (AQCE…VCKE), 266–336 (ILCP…YCVL), 341–400 (VLCL…VCEK), 401–460 (GCQA…QCTV), 461–516 (AECK…LCKE), 517–587 (ITCP…LCKL), 592–651 (VQCT…LCKK), 652–706 (EGCE…VCTV), 707–771 (ILCQ…QCLQ), 776–835 (THCP…TCIR), 839–899 (LGCQ…FCKE), and 900–960 (VNCS…LCKY). Cystine bridges form between Cys82–Cys124, Cys110–Cys138, Cys146–Cys189, Cys175–Cys202, Cys207–Cys248, Cys234–Cys263, Cys268–Cys317, Cys297–Cys334, Cys343–Cys385, Cys371–Cys398, Cys402–Cys445, Cys431–Cys458, Cys463–Cys501, Cys487–Cys514, Cys519–Cys568, Cys548–Cys585, Cys594–Cys636, Cys622–Cys649, Cys654–Cys689, Cys675–Cys704, Cys709–Cys752, Cys738–Cys769, Cys778–Cys820, Cys806–Cys833, Cys841–Cys884, and Cys870–Cys897. Asn276, Asn316, Asn364, and Asn380 each carry an N-linked (GlcNAc...) asparagine glycan. Residue Asn484 is glycosylated (N-linked (GlcNAc...) asparagine). N-linked (GlcNAc...) asparagine glycosylation is present at Asn527. Asn615 and Asn639 each carry an N-linked (GlcNAc...) asparagine glycan. An N-linked (GlcNAc...) asparagine glycan is attached at Asn694. N-linked (GlcNAc...) asparagine glycans are attached at residues Asn754, Asn790, Asn813, Asn823, and Asn851. N-linked (GlcNAc...) asparagine glycosylation occurs at Asn901. 2 disulfide bridges follow: Cys902-Cys945 and Cys931-Cys958. Residues 964 to 990 (STIPLICGISVGSALIILMSVGFCMIL) traverse the membrane as a helical segment. Residues 991 to 1025 (KHRESNYYTKTRPKEGALHLETREVYSIDPYNPAS) are Cytoplasmic-facing.

The protein belongs to the receptors of complement activation (RCA) family. In terms of assembly, interacts (via Sushi domain 1 and 2) with C3. Interacts with CD19. Part of a complex composed of CD19, CR2/CD21, CD81 and IFITM1/CD225 in the membrane of mature B-cells. Interacts (via Sushi domain 1 and 2) with FCER2 (via the C-terminus). Interacts with CD23. Interacts with FCRL5. Interacts with CR1. Interacts with INFNA1. In terms of tissue distribution, B-lymphocytes.

It localises to the cell membrane. In terms of biological role, serves as a receptor for various ligands including complement component CD3d, HNRNPU OR IFNA1. When C3d is bound to antigens, attaches to C3d on B-cell surface and thereby facilitates the recognition and uptake of antigens by B-cells. This interaction enhances B-cell activation and subsequent immune responses. Forms a complex with several partners on the surface of B-cells including CD19, FCRL5 and CD81, to form the B-cell coreceptor complex that plays a crucial role in B-cell activation and signaling. Also induces specific intracellular signaling separately from the BCR and CD19 by activating the tyrosine kinase SRC, which then phosphorylates nucleolin/NCL and triggers AKT and GSK3 kinase activities in a SYK/CD19-independent manner. Acts as a ligand for CD23 (FcepsilonRII), a low-affinity receptor for IgE, which is expressed on B-cells and other immune cells, and thus participates in the regulation of IgE production. The chain is Complement receptor type 2 (Cr2) from Mus musculus (Mouse).